Here is a 424-residue protein sequence, read N- to C-terminus: Calreticulin (424 aa).

Residues 1–29 (MAIRARSSSYAAAAVALALALASVAAVAG) form the signal peptide. N-linked (GlcNAc...) asparagine glycosylation is present at Asn61. An intrachain disulfide couples Cys115 to Cys147. An alpha-D-glucoside-binding residues include Tyr119, Lys121, Tyr138, and Asp145. Repeat copies occupy residues 201–212 (KQSGSIYEHWDI), 220–231 (DPEAKKPEDWDD), 237–248 (DPEDKKPEGYDD), 255–266 (DPDAKKPEDWDD), 270–280 (GEWTAPTIPNP), 284–294 (GPWKQKKIKNP), and 298–308 (GKWKAPMIDNP). The interval 201 to 266 (KQSGSIYEHW…DAKKPEDWDD (66 aa)) is 4 X approximate repeats. The segment covering 217–262 (QIKDPEAKKPEDWDDKEYIPDPEDKKPEGYDDIPKEIPDPDAKKPE) has biased composition (basic and acidic residues). The segment at 217–289 (QIKDPEAKKP…PEYKGPWKQK (73 aa)) is disordered. Residues 270–308 (GEWTAPTIPNPEYKGPWKQKKIKNPNYQGKWKAPMIDNP) form a 3 X approximate repeats region. Glu328 contacts an alpha-D-glucoside. The segment covering 356-385 (ETWGKHKDAEKAAFDEAEKKKEEEEAAKAG) has biased composition (basic and acidic residues). Residues 356-424 (ETWGKHKDAE…DSDDEKHDEL (69 aa)) form a disordered region. The segment covering 386 to 401 (EDDDDLDDEDAEDEDK) has biased composition (acidic residues). Positions 402 to 424 (ADEKADSDAEDGKDSDDEKHDEL) are enriched in basic and acidic residues. Residues 421 to 424 (HDEL) carry the Prevents secretion from ER motif.

It belongs to the calreticulin family. Post-translationally, phosphorylated.

The protein resides in the endoplasmic reticulum lumen. Its function is as follows. Molecular calcium-binding chaperone promoting folding, oligomeric assembly and quality control in the ER via the calreticulin/calnexin cycle. This lectin may interact transiently with almost all of the monoglucosylated glycoproteins that are synthesized in the ER. The sequence is that of Calreticulin from Oryza sativa subsp. japonica (Rice).